Here is a 1247-residue protein sequence, read N- to C-terminus: MEFIPAQTYYNRRYQPRPWTQRPTIQVIRPKPRRSRPAGQLAQLISAVSRLALRTVPQKPRRTRKTKKQKQVKQEQQSTRNQKKKAPKQKQTQKKKRPGRRERMCMKIENDCIFEVKHEGKITGYACLVGDKVMKPAHVKGTIDNADLAKLAFKRSSKYDLECAQIPVHMKSDASKFTHEKPEGYYNWHHGAVQYSGGRFTIPTGAGKPGDSGRPIFDNKGRVVAIVLGGANEGTRTALSVVTWNKDIVTKITPEGSVEWSLALPVMCLLANTTFPCSQPPCAPCCYEKKPEETLRMLEDNVMQPGYYQLLDSALACSQHRQRRNARENFNVYKVTRPYLAHCPDCGEGHSCHSPIALERIRSEATDGTLKIQVSLQIGIKTDDSHDWTKLRYMDSHTPVDADRSGLFVRTSAPCTITGTMGHFILARCPKGETLTVGFVDSRRISHTCMHPFHHEPPLIGREKFHSRPQHGKELPCSTYVHTTAATTEEIEVHMPPDTPDYTLMTQQAGNVKITVDGQTVRYKCKCDGSNEGLITTDKVINNCKVDQCHTAVTNHKKWQYNSPLTPRNSEQGDRKGKIHIPFPLVNTTCRVPKARNPTITYGKNRVTLLLYPDHPTLLSYRSMGRIPDYHEEWITSKKEISITVPAEGLEVTWGNNDPYKYWPQLSTNGTAHGHPHEIILYYYELYPTTTIAVLAAASIVVASLVSLSLGMCICARRRCITPYELTPGATIPFLLGVLCCVKTAKAASYYEAATYLWNEQQPLFWLQLLIPLSAAIVACNCLKLLPCCCKTLTFLAVMSIGARTVSAYEHATVIPNTVGVPYKTLVSRPGYSPMVLEMELQSVTLEPTLFLDYITCEYKTITPSPYVKCCGTAECKAKNLPDYNCKVFTGVYPFMWGGAYCFCDAENTQLSEAHVEKSESCKTEFASAYRAHTASVSAKLRVFYQGNNITVSAYANGDHAVTVKDAKFVIGPLSSAWSPFDNKIVVYKGEVYNMDYPPFGAGRPGQFGDIQSRTPDSKDVYANTQLILQRPAAGAIHVPYSQAPSGFKYWLKEKGASLQHTAPFGCQIATNPVRAVNCAVGNIPVSIDIPDAAFTRVTDAPSVTDMSCEVASCTHSSDFGGAAVVKYTASKKGKCAVHSLTNAVTIREPNVDVEGTAQLQIAFSTALASAEFKVQICSTQVHCSATCHPPKDHIVNYPSPHTTLGVQDISTTAMSWVQKITGGVGLVVAIAALILIIVLCVSFSRH.

The tract at residues 52-103 (ALRTVPQKPRRTRKTKKQKQVKQEQQSTRNQKKKAPKQKQTQKKKRPGRRER) is disordered. Composition is skewed to basic residues over residues 59-71 (KPRR…KQKQ) and 81-100 (NQKK…RPGR). Positions 86 to 99 (APKQKQTQKKKRPG) are ribosome-binding. The cysteines at positions 112 and 127 are disulfide-linked. Positions 112–260 (CIFEVKHEGK…KITPEGSVEW (149 aa)) constitute a Peptidase S3 domain. Catalysis depends on H138, which acts as the Charge relay system. Residues 154-159 (KRSSKY) form an interaction with spike glycoprotein E2 region. Catalysis depends on charge relay system residues D160 and S212. Positions 261–273 (SLALPVMCLLANT) are functions as an uncleaved signal peptide for the precursor of protein E3/E2. Cystine bridges form between C268–C277, C282–C286, C285–C317, C343–C449, C346–C352, C415–C429, C477–C590, C525–C549, and C527–C544. N-linked (GlcNAc...) asparagine; by host glycosylation is present at N272. Over 325–691 (NARENFNVYK…YYYELYPTTT (367 aa)) the chain is Extracellular. An N-linked (GlcNAc...) asparagine; by host glycan is attached at N587. Residues 692-712 (IAVLAAASIVVASLVSLSLGM) traverse the membrane as a helical segment. Topologically, residues 713 to 747 (CICARRRCITPYELTPGATIPFLLGVLCCVKTAKA) are cytoplasmic. Residues 715–719 (CARRR) are interaction with the capsid protein. S-palmitoyl cysteine; by host attachment occurs at residues C720, C740, and C741. Residues 720 to 740 (CITPYELTPGATIPFLLGVLC) are transient transmembrane before p62-6K protein processing. Cysteines 720 and 741 form a disulfide. At 748–762 (ASYYEAATYLWNEQQ) the chain is on the extracellular side. A helical membrane pass occupies residues 763–783 (PLFWLQLLIPLSAAIVACNCL). The Cytoplasmic segment spans residues 784–787 (KLLP). The helical transmembrane segment at 788–808 (CCCKTLTFLAVMSIGARTVSA) threads the bilayer. The Extracellular segment spans residues 809-1223 (YEHATVIPNT…AMSWVQKITG (415 aa)). 4 cysteine pairs are disulfide-bonded: C857–C922, C870–C902, C871–C904, and C876–C886. An E1 fusion peptide loop region spans residues 892–909 (VYPFMWGGAYCFCDAENT). N-linked (GlcNAc...) asparagine; by host glycosylation is found at N949 and N1078. Cystine bridges form between C1067/C1079, C1109/C1184, C1114/C1188, and C1136/C1178. A helical membrane pass occupies residues 1224-1244 (GVGLVVAIAALILIIVLCVSF). C1241 is lipidated: S-palmitoyl cysteine; by host. At 1245–1247 (SRH) the chain is on the cytoplasmic side.

Homodimer. Homomultimer. Interacts with host karyopherin KPNA4; this interaction allows the nuclear import of the viral capsid protein. Interacts with spike glycoprotein E2. Interacts with host IRAK1; the interaction leads to inhibition of IRAK1-dependent signaling. In terms of assembly, the precursor of protein E3/E2 and E1 form a heterodimer shortly after synthesis. As to quaternary structure, the precursor of protein E3/E2 and E1 form a heterodimer shortly after synthesis. Processing of the precursor of protein E3/E2 into E2 and E3 results in a heterodimer of the spike glycoproteins E2 and E1. Spike at virion surface are constituted of three E2-E1 heterodimers. After target cell attachment and endocytosis, E1 change conformation to form homotrimers. Interacts with 6K protein. Interacts with spike glycoprotein E1. Processing of the precursor of protein E3/E2 into E2 and E3 results in a heterodimer of the spike glycoproteins E2 and E1. Spike at virion surface are constituted of a trimer of E2-E1 heterodimers. Interacts with 6K protein. Interacts with host MXRA8; this interaction mediates virus entry. In terms of assembly, oligomer. Interacts with spike glycoprotein E1. Interacts with spike glycoprotein E2. Structural polyprotein: Specific enzymatic cleavages in vivo yield mature proteins. Capsid protein is auto-cleaved during polyprotein translation, unmasking a signal peptide at the N-terminus of the precursor of E3/E2. The remaining polyprotein is then targeted to the host endoplasmic reticulum, where host signal peptidase cleaves it into pE2, 6K and E1 proteins. pE2 is further processed to mature E3 and E2 by host furin in trans-Golgi vesicle. Post-translationally, palmitoylated via thioester bonds. These palmitoylations may induce disruption of the C-terminus transmembrane. This would result in the reorientation of E2 C-terminus from lumenal to cytoplasmic side. In terms of processing, N-glycosylated. Palmitoylated via thioester bonds.

The protein resides in the virion. It localises to the host cytoplasm. It is found in the host cell membrane. Its subcellular location is the virion membrane. The protein localises to the host Golgi apparatus. The protein resides in the host trans-Golgi network. It localises to the host endoplasmic reticulum. The enzyme catalyses Autocatalytic release of the core protein from the N-terminus of the togavirus structural polyprotein by hydrolysis of a -Trp-|-Ser- bond.. Functionally, possesses a protease activity that results in its autocatalytic cleavage from the nascent structural protein. Following its self-cleavage, the capsid protein transiently associates with ribosomes, and within several minutes the protein binds to viral RNA and rapidly assembles into icosahedric core particles. The resulting nucleocapsid eventually associates with the cytoplasmic domain of the spike glycoprotein E2 at the cell membrane, leading to budding and formation of mature virions. In case of infection, new virions attach to target cells and after clathrin-mediated endocytosis their membrane fuses with the host endosomal membrane. This leads to the release of the nucleocapsid into the cytoplasm, followed by an uncoating event necessary for the genomic RNA to become accessible. The uncoating might be triggered by the interaction of capsid proteins with ribosomes. Binding of ribosomes would release the genomic RNA since the same region is genomic RNA-binding and ribosome-binding. Its function is as follows. Provides the signal sequence for the translocation of the precursor of protein E3/E2 to the host endoplasmic reticulum. Mediates pH protection of spike glycoprotein E1 during the transport via the secretory pathway. In terms of biological role, plays a role in viral attachment to target host cell, by binding to the cell receptor MXRA8. Synthesized as a p62 precursor which is processed by furin at the cell membrane just before virion budding, giving rise to E2-E1 heterodimer. The p62-E1 heterodimer is stable, whereas E2-E1 is unstable and dissociate at low pH. p62 is processed at the last step, presumably to avoid E1 fusion activation before its final export to cell surface. E2 C-terminus contains a transitory transmembrane that would be disrupted by palmitoylation, resulting in reorientation of the C-terminal tail from lumenal to cytoplasmic side. This step is critical since E2 C-terminus is involved in budding by interacting with capsid proteins. This release of E2 C-terminus in cytoplasm occurs lately in protein export, and precludes premature assembly of particles at the endoplasmic reticulum membrane. Acts as a viroporin that participates in virus glycoprotein processing and transport to the plasma membrane, cell permeabilization and budding of viral particles. Disrupts the calcium homeostasis of the cell, probably at the endoplasmic reticulum level. This leads to cytoplasmic calcium elevation. Because of its lipophilic properties, the 6K protein is postulated to influence the selection of lipids that interact with the transmembrane domains of the glycoproteins, which, in turn, affects the deformability of the bilayer required for the extreme curvature that occurs as budding proceeds. Present in low amount in virions, about 3% compared to viral glycoproteins. Functionally, class II viral fusion protein. Fusion activity is inactive as long as E1 is bound to E2 in mature virion. After virus attachment to target cell via host MXRA8 and endocytosis, acidification of the endosome induce dissociation of E1/E2 heterodimer and concomitant trimerization of the E1 subunits. This E1 trimer is fusion active, and promotes release of viral nucleocapsid in cytoplasm after endosome and viral membrane fusion. Efficient fusion requires the presence of cholesterol and sphingolipid in the target membrane. This is Structural polyprotein from O'nyong-nyong virus (strain SG650) (ONNV).